The chain runs to 364 residues: MITTTIFPGRYVQGAGAINILEEELSRFGERAFVVIDDFVDKNVLGENFFSSFTKVRVNKQIFGGECSDEEIERLSGLVEEETDVVVGIGGGKTLDTAKAVAYKLKKPVVIVPTIASTDAPCSALSVIYTPNGEFKRYLFLPRNPDVVLVDTEIVAKAPARFLVAGMGDALATWFEAESCKQKYAPNMTGRLGSMTAYALARLCYETLLEYGVLAKRSVEEKSVTPALEKIVEANTLLSGLGFESGGLAAAHAIHNGLTVLENTHKYLHGEKVAIGVLASLFLTDKPRKMIEEVYSFCEEVGLPTTLAEIGLDGVSDEDLMKVAEKACDKNETIHNEPQPVTSKDVFFALKAADRYGRMRKNLT.

NAD(+) contacts are provided by Asp37, Gly92, Lys93, Thr114, and Ser117. Asp119 contacts glycerol. Ser123, Leu125, and Tyr129 together coordinate NAD(+). 3 residues coordinate glycerol: Asp169, His252, and His269. 3 residues coordinate Zn(2+): Asp169, His252, and His269.

Belongs to the iron-containing alcohol dehydrogenase family. Zn(2+) serves as cofactor.

The enzyme catalyses glycerol + NAD(+) = dihydroxyacetone + NADH + H(+). It participates in polyol metabolism; glycerol fermentation; glycerone phosphate from glycerol (oxidative route): step 1/2. Its function is as follows. Catalyzes the NAD-dependent oxidation of glycerol to dihydroxyacetone (glycerone). This is Glycerol dehydrogenase (gldA) from Thermotoga maritima (strain ATCC 43589 / DSM 3109 / JCM 10099 / NBRC 100826 / MSB8).